We begin with the raw amino-acid sequence, 200 residues long: Arylesterase (200 aa).

The first 19 residues, 1–19, serve as a signal peptide directing secretion; sequence MIRLLSLVLFFCLSAASQA. Catalysis depends on Ser29, which acts as the Nucleophile. Active-site residues include Asp176 and His179.

It belongs to the 'GDSL' lipolytic enzyme family. Homodimer.

The catalysed reaction is a phenyl acetate + H2O = a phenol + acetate + H(+). In terms of biological role, favors the hydrolysis of several arylesters. This Vibrio mimicus protein is Arylesterase.